A 419-amino-acid chain; its full sequence is Gamma-glutamyl phosphate reductase (419 aa).

It belongs to the gamma-glutamyl phosphate reductase family.

It is found in the cytoplasm. It catalyses the reaction L-glutamate 5-semialdehyde + phosphate + NADP(+) = L-glutamyl 5-phosphate + NADPH + H(+). It participates in amino-acid biosynthesis; L-proline biosynthesis; L-glutamate 5-semialdehyde from L-glutamate: step 2/2. Catalyzes the NADPH-dependent reduction of L-glutamate 5-phosphate into L-glutamate 5-semialdehyde and phosphate. The product spontaneously undergoes cyclization to form 1-pyrroline-5-carboxylate. In Syntrophomonas wolfei subsp. wolfei (strain DSM 2245B / Goettingen), this protein is Gamma-glutamyl phosphate reductase.